A 310-amino-acid chain; its full sequence is MSQKRKVAIIGSGNIGTDLMIKILRNAKHLEMAAMVGIDQASDGLARAARMGVATTADGVDGLTRLPVFQDIDFVFDATSAGAHVKNDAFLRQHKASLRMIDLTPAAIGPYCVPVVNLEQHLQAINVNMVTCGGQATIPMVAAVSRVAKVHYAEIVASIASKSAGPGTRANIDEFTETTSKAIEVIGGATKGKAIIIMNPAEPPLMMRDTVYVLSETADQKQIAASIEEMAASVQAYVPGYRLKQQVQFEQVHNLTLPGQGTFTGLKTSVFLEVEGAAHYLPAYAGNLDIMTSAALATAERMAQAMGPLA.

12-15 is an NAD(+) binding site; the sequence is SGNI. Residue Cys132 is the Acyl-thioester intermediate of the active site. Residues 163–171 and Asn287 contribute to the NAD(+) site; that span reads SAGPGTRAN.

This sequence belongs to the acetaldehyde dehydrogenase family.

The catalysed reaction is acetaldehyde + NAD(+) + CoA = acetyl-CoA + NADH + H(+). This is Acetaldehyde dehydrogenase 1 from Pseudomonas putida (strain W619).